The sequence spans 314 residues: 4-hydroxy-3-methylbut-2-enyl diphosphate reductase (314 aa).

A [4Fe-4S] cluster-binding site is contributed by Cys12. (2E)-4-hydroxy-3-methylbut-2-enyl diphosphate-binding residues include His41 and His74. 2 residues coordinate dimethylallyl diphosphate: His41 and His74. Isopentenyl diphosphate-binding residues include His41 and His74. Residue Cys96 participates in [4Fe-4S] cluster binding. His124 provides a ligand contact to (2E)-4-hydroxy-3-methylbut-2-enyl diphosphate. His124 contributes to the dimethylallyl diphosphate binding site. His124 is a binding site for isopentenyl diphosphate. The Proton donor role is filled by Glu126. Thr167 is a (2E)-4-hydroxy-3-methylbut-2-enyl diphosphate binding site. Cys197 serves as a coordination point for [4Fe-4S] cluster. Residues Ser225, Ser226, Asn227, and Ser269 each coordinate (2E)-4-hydroxy-3-methylbut-2-enyl diphosphate. Dimethylallyl diphosphate contacts are provided by Ser225, Ser226, Asn227, and Ser269. Isopentenyl diphosphate is bound by residues Ser225, Ser226, Asn227, and Ser269.

It belongs to the IspH family. [4Fe-4S] cluster is required as a cofactor.

The catalysed reaction is isopentenyl diphosphate + 2 oxidized [2Fe-2S]-[ferredoxin] + H2O = (2E)-4-hydroxy-3-methylbut-2-enyl diphosphate + 2 reduced [2Fe-2S]-[ferredoxin] + 2 H(+). The enzyme catalyses dimethylallyl diphosphate + 2 oxidized [2Fe-2S]-[ferredoxin] + H2O = (2E)-4-hydroxy-3-methylbut-2-enyl diphosphate + 2 reduced [2Fe-2S]-[ferredoxin] + 2 H(+). It participates in isoprenoid biosynthesis; dimethylallyl diphosphate biosynthesis; dimethylallyl diphosphate from (2E)-4-hydroxy-3-methylbutenyl diphosphate: step 1/1. It functions in the pathway isoprenoid biosynthesis; isopentenyl diphosphate biosynthesis via DXP pathway; isopentenyl diphosphate from 1-deoxy-D-xylulose 5-phosphate: step 6/6. Its function is as follows. Catalyzes the conversion of 1-hydroxy-2-methyl-2-(E)-butenyl 4-diphosphate (HMBPP) into a mixture of isopentenyl diphosphate (IPP) and dimethylallyl diphosphate (DMAPP). Acts in the terminal step of the DOXP/MEP pathway for isoprenoid precursor biosynthesis. The sequence is that of 4-hydroxy-3-methylbut-2-enyl diphosphate reductase from Idiomarina loihiensis (strain ATCC BAA-735 / DSM 15497 / L2-TR).